A 126-amino-acid chain; its full sequence is Holo-[acyl-carrier-protein] synthase (126 aa).

The Mg(2+) site is built by aspartate 8 and glutamate 57.

It belongs to the P-Pant transferase superfamily. AcpS family. It depends on Mg(2+) as a cofactor.

The protein localises to the cytoplasm. The catalysed reaction is apo-[ACP] + CoA = holo-[ACP] + adenosine 3',5'-bisphosphate + H(+). Functionally, transfers the 4'-phosphopantetheine moiety from coenzyme A to a Ser of acyl-carrier-protein. In Geobacter sulfurreducens (strain ATCC 51573 / DSM 12127 / PCA), this protein is Holo-[acyl-carrier-protein] synthase.